The chain runs to 243 residues: Venom nerve growth factor 1 (243 aa).

An N-terminal signal peptide occupies residues 1 to 18; it reads MSMLCYTLIIAFLIGIWA. Positions 19–125 are excised as a propeptide; that stretch reads VPKSEDNAPL…ALNRNIRAKR (107 aa). 3 cysteine pairs are disulfide-bonded: Cys-139/Cys-204, Cys-182/Cys-232, and Cys-192/Cys-234. N-linked (GlcNAc...) asparagine glycosylation occurs at Asn-148.

The protein belongs to the NGF-beta family. In terms of assembly, homodimer; non-covalently linked. Expressed by the venom gland.

It localises to the secreted. In terms of biological role, nerve growth factor is important for the development and maintenance of the sympathetic and sensory nervous systems. It stimulates division and differentiation of sympathetic and embryonic sensory neurons as well as basal forebrain cholinergic neurons in the brain. Its relevance in the snake venom is not clear. However, it has been shown to inhibit metalloproteinase-dependent proteolysis of platelet glycoprotein Ib alpha, suggesting a metalloproteinase inhibition to prevent metalloprotease autodigestion and/or protection against prey proteases. Binds a lipid between the two protein chains in the homodimer. The lipid-bound form promotes histamine relase from mouse mast cells, contrary to the lipid-free form. This chain is Venom nerve growth factor 1, found in Naja sputatrix (Malayan spitting cobra).